A 1184-amino-acid chain; its full sequence is Protein stu1 (1184 aa).

HEAT repeat units lie at residues 92–130 (FCPV…EHYV) and 162–194 (RSYV…FQGA). Basic and acidic residues-rich tracts occupy residues 229–240 (SSTARPRSRVEP) and 308–317 (EAEKAPHMET). The segment at 229 to 336 (SSTARPRSRV…APQPLHAETS (108 aa)) is disordered. Residues 463–499 (VTYTPRLLQHVTSACQDKNAQLRLFAAGWLKTLLNKQ) form an HEAT 3 repeat. Disordered regions lie at residues 564–584 (LEKD…SDTL) and 602–906 (ARLA…RVEE). Polar residues predominate over residues 572–584 (NRDQSSYLSSDTL). Low complexity predominate over residues 640–649 (APLSSLSSAP). Positions 723 to 737 (SASNENETQVATQVA) are enriched in polar residues. Basic and acidic residues-rich tracts occupy residues 787–811 (AGRH…ENKL) and 882–895 (EQDR…DSAE).

The protein belongs to the CLASP family. Interacts with microtubules.

It localises to the cytoplasm. The protein localises to the cytoskeleton. The protein resides in the nucleus. Its subcellular location is the spindle. Functionally, microtubule binding protein that promotes the stabilization of dynamic microtubules. Required for mitotic spindle formation. The sequence is that of Protein stu1 (stu1) from Aspergillus oryzae (strain ATCC 42149 / RIB 40) (Yellow koji mold).